The primary structure comprises 1194 residues: MGPRKKSAKVCVMDSEVAEEMTADEEKDYMNQLSHEVLCHIFRYLPLQDIMCMECLSRKLKEAVTLYLRVVRVVDLCAGRWWEYMPSGFTDSSFLTLLKKMPDVEQLYGLHPRYLERRRVRGQEAFSIPGVLEALQACPNLVGVETSHLELVESIWTYMPHVHILGKFRNRNGAFPIPPENKLKIPIGAKIQTLHLVGVNVPEIPCIPMLRHLYMKWVRLTKPQPFKDFLCISLRTFVMRNCAGPTNSLKYVPLVTGLASARNLEHLEMVRVPFLGGLIQHVVEDSWRSGGFRNLHTIVLGACKNALEVDLGYLIITAARRLHEVRIQPSLTKDGVFSALKMAELEFPQFETLHLGYVDEFLLQSRMANADLVKYGLADVVENPGIITDIGMKAVNEVFSCIKYLAIYNCPHLHNPYNWISDHSRWMRLVDINLVRCHALKLDSFGQFVELLPSLEFISLDQMFREPPKGCARVGLSAGTGIGVSSALVSNQNSNNDNDNNAPNNNANLHDNNHHHPDDSDDDNDFRPDLQAGEAQFAADALNEMEDMVQEDGELVAESGNGMPAHNREVLPVDADEEQAGPSGLQRVVKPTPIADHDSESDDEEDSLELQEVWAPKNGTRRYSEREEKTGDSGQSRETAVSGKGKTPLRKRCNNSHQTGQAKPFPLEESSCEKGCQVTSEQIKADMKAARDVSEKKKSKDVYPSCSSSSSSTAASTAGNASSPSTASQSPDFARTVTSSGSSEPSPPEVDVSRQCVCSPGGSEDSEAMEEGDAESSVCPRCCCLRPQESQRRTGRCSDEERPSTSRACVVNGADGTRSAFSFRTLPQGGSSGPAHDERTNGSGCGATGEDRRGSSQPESCDVQSNEDYPRRPLTRARSRLSHVPLISESEVAKTKPCHAMKRKRTADKSTSTSDPVIEDDHVQVLVLKSKNLVGVTMTNCGITDLVLKDCPKMMFIHATRCRVLKHLKVENAPIVNRFDYAQCKKLNMDQVLDQILRMPPERNRIIYLRPMQQVDTLTLEQKLFSGPYPYHICIIHEFSNPPNVRNKVRIRNWMDTIANINQELIKYEFFLEATRTEEDLKKYPKYPWGREIYTLEGVVDGAPYSMISDFPWLRSLRTAEPNSFARYDFEDDEESTIYAPRRKGQLSADICMETIGEEISEMRQMKRGIFQRVVAIFIHYCDVNGEPVEDDYI.

The F-box domain occupies Met30–Asp75. Residues Lys59 to Arg119 are interaction with KLF7. 3 short sequence motifs (nuclear export signal) span residues Leu194–Val201, Leu307–Ile316, and Leu451–Leu460. Disordered regions lie at residues Ala487–Asp529, Glu577–Ser776, Arg793–Ser879, and Lys896–Asp915. Residues Asn493–His510 show a composition bias toward low complexity. Position 592 is a phosphothreonine (Thr592). Phosphoserine occurs at positions 599, 601, and 607. Residues Ser599–Glu609 are compositionally biased toward acidic residues. 2 stretches are compositionally biased toward basic and acidic residues: residues Arg622 to Gly631 and Ile683 to Asp701. Residues Ser705–Ser728 show a composition bias toward low complexity. Phosphoserine is present on residues Ser742 and Ser746. Positions Glu764–Ala774 are enriched in acidic residues. Residues Arg793–Ser804 are compositionally biased toward basic and acidic residues. Positions Ser855–Glu867 are enriched in polar residues. A compositionally biased stretch (basic residues) spans Lys896–Thr906. The short motif at Lys902 to Arg905 is the Nuclear localization signal element.

In terms of assembly, part of the SCF (SKP1-CUL1-F-box) E3 ubiquitin-protein ligase complex SCF(FBXO38) composed of CUL1, SKP1, RBX1 and FBXO38. Interacts with KLF7. Interacts with PDCD1/PD-1. In terms of tissue distribution, expressed at high levels in embryo (developing brain, spinal cord, branchial arms and limbs). Widely expressed at low levels in adult tissues, with highest expression in testis. Expressed in postmeiotic spermatids.

It is found in the cytoplasm. It localises to the cytosol. The protein localises to the nucleus. The protein operates within protein modification; protein ubiquitination. Functionally, substrate recognition component of a SCF (SKP1-CUL1-F-box protein) E3 ubiquitin-protein ligase complex which mediates the ubiquitination and subsequent proteasomal degradation of PDCD1/PD-1, thereby regulating T-cells-mediated immunity. Required for anti-tumor activity of T-cells by promoting the degradation of PDCD1/PD-1; the PDCD1-mediated inhibitory pathway being exploited by tumors to attenuate anti-tumor immunity and facilitate tumor survival. May indirectly stimulate the activity of transcription factor KLF7, a regulator of neuronal differentiation, without promoting KLF7 ubiquitination. The polypeptide is F-box only protein 38 (Mus musculus (Mouse)).